The following is a 416-amino-acid chain: Putative competence-damage inducible protein (416 aa).

Belongs to the CinA family.

The polypeptide is Putative competence-damage inducible protein (Bacillus pumilus (strain SAFR-032)).